Reading from the N-terminus, the 87-residue chain is Small ribosomal subunit protein eS21 (87 aa).

This sequence belongs to the eukaryotic ribosomal protein eS21 family. In terms of assembly, component of the small ribosomal subunit. Mature ribosomes consist of a small (40S) and a large (60S) subunit. The 40S subunit contains about 33 different proteins and 1 molecule of RNA (18S). The 60S subunit contains about 49 different proteins and 3 molecules of RNA (25S, 5.8S and 5S).

Its subcellular location is the cytoplasm. Its function is as follows. Required for the processing of the 20S rRNA-precursor to mature 18S rRNA in a late step of the maturation of 40S ribosomal subunits. Has a physiological role leading to 18S rRNA stability. This is Small ribosomal subunit protein eS21 (RPS21) from Eremothecium gossypii (strain ATCC 10895 / CBS 109.51 / FGSC 9923 / NRRL Y-1056) (Yeast).